The chain runs to 201 residues: NADH-quinone oxidoreductase subunit C (201 aa).

Belongs to the complex I 30 kDa subunit family. NDH-1 is composed of 14 different subunits. Subunits NuoB, C, D, E, F, and G constitute the peripheral sector of the complex.

The protein resides in the cell inner membrane. It carries out the reaction a quinone + NADH + 5 H(+)(in) = a quinol + NAD(+) + 4 H(+)(out). In terms of biological role, NDH-1 shuttles electrons from NADH, via FMN and iron-sulfur (Fe-S) centers, to quinones in the respiratory chain. The immediate electron acceptor for the enzyme in this species is believed to be ubiquinone. Couples the redox reaction to proton translocation (for every two electrons transferred, four hydrogen ions are translocated across the cytoplasmic membrane), and thus conserves the redox energy in a proton gradient. In Ruegeria sp. (strain TM1040) (Silicibacter sp.), this protein is NADH-quinone oxidoreductase subunit C.